We begin with the raw amino-acid sequence, 468 residues long: Immunoglobulin superfamily member 21 (468 aa).

Residues 1–24 (MRAAPSLRRASCLLLAAILDLARG) form the signal peptide. Ig-like domains lie at 25–132 (YLTV…VVLA) and 344–429 (PKIM…TRLI). Residues Cys-46 and Cys-116 are joined by a disulfide bond.

Interacts (Ig-like 1 domain) with NRXN2 (via Laminin G-like 1 domain) in a trans-interaction manner. Expressed in brain.

The protein localises to the postsynaptic cell membrane. Functionally, involved in synaptic inhibition in the brain. Selectively regulates inhibitory presynaptic differentiation through interacting with presynaptic NRXN2. The polypeptide is Immunoglobulin superfamily member 21 (Rattus norvegicus (Rat)).